A 183-amino-acid polypeptide reads, in one-letter code: Capsid protein (183 aa).

The tract at residues 143–183 (LPETTVVRRRGRSPRRRTPSPRRRRSQSPRRRRSQSRESQC) is disordered. Residues 149–176 (VRRRGRSPRRRTPSPRRRRSQSPRRRRS) are compositionally biased toward basic residues. Phosphoserine; by host is present on residues serine 155, serine 162, and serine 170. One copy of the 1; half-length repeat lies at 155 to 161 (SPRRRTP). The segment at 155 to 177 (SPRRRTPSPRRRRSQSPRRRRSQ) is 3 X 8 AA repeats of S-P-R-R-R-[PR]-S-Q. The short motif at 158–175 (RRTPSPRRRRSQSPRRRR) is the Bipartite nuclear localization signal element. Repeat copies occupy residues 162 to 169 (SPRRRRSQ) and 170 to 177 (SPRRRRSQ). Positions 177-183 (QSRESQC) are RNA binding.

It belongs to the orthohepadnavirus core antigen family. In terms of assembly, homodimerizes, then multimerizes. Interacts with cytosol exposed regions of viral L glycoprotein present in the reticulum-to-Golgi compartment. Interacts with human FLNB. Phosphorylated form interacts with host importin alpha; this interaction depends on the exposure of the NLS, which itself depends upon genome maturation and/or phosphorylation of the capsid protein. Interacts with host NUP153. Phosphorylated by host SRPK1, SRPK2, and maybe protein kinase C or GAPDH. Phosphorylation is critical for pregenomic RNA packaging. Protein kinase C phosphorylation is stimulated by HBx protein and may play a role in transport of the viral genome to the nucleus at the late step during the viral replication cycle.

It localises to the virion. The protein resides in the host cytoplasm. Its function is as follows. Self assembles to form an icosahedral capsid. Most capsids appear to be large particles with an icosahedral symmetry of T=4 and consist of 240 copies of capsid protein, though a fraction forms smaller T=3 particles consisting of 180 capsid proteins. Entering capsids are transported along microtubules to the nucleus. Phosphorylation of the capsid is thought to induce exposure of nuclear localization signal in the C-terminal portion of the capsid protein that allows binding to the nuclear pore complex via the importin (karyopherin-) alpha and beta. Capsids are imported in intact form through the nuclear pore into the nuclear basket, where it probably binds NUP153. Only capsids that contain the mature viral genome can release the viral DNA and capsid protein into the nucleoplasm. Immature capsids get stuck in the basket. Capsids encapsulate the pre-genomic RNA and the P protein. Pre-genomic RNA is reverse-transcribed into DNA while the capsid is still in the cytoplasm. The capsid can then either be directed to the nucleus, providing more genomes for transcription, or bud through the endoplasmic reticulum to provide new virions. This chain is Capsid protein, found in Homo sapiens (Human).